The chain runs to 197 residues: Holliday junction branch migration complex subunit RuvA (197 aa).

The segment at 1–64 (MYDYIKGIYK…DDSINLYGFF (64 aa)) is domain I. Residues 65–143 (TEEERDMFNL…NDDIISDIDD (79 aa)) form a domain II region. The tract at residues 144–154 (LDSISNFQLHS) is flexible linker. Positions 154 to 197 (SAEALEALMSLGYSQKESEKALKNVDKENSLEDIIKACLKYLMG) are domain III.

This sequence belongs to the RuvA family. Homotetramer. Forms an RuvA(8)-RuvB(12)-Holliday junction (HJ) complex. HJ DNA is sandwiched between 2 RuvA tetramers; dsDNA enters through RuvA and exits via RuvB. An RuvB hexamer assembles on each DNA strand where it exits the tetramer. Each RuvB hexamer is contacted by two RuvA subunits (via domain III) on 2 adjacent RuvB subunits; this complex drives branch migration. In the full resolvosome a probable DNA-RuvA(4)-RuvB(12)-RuvC(2) complex forms which resolves the HJ.

Its subcellular location is the cytoplasm. The RuvA-RuvB-RuvC complex processes Holliday junction (HJ) DNA during genetic recombination and DNA repair, while the RuvA-RuvB complex plays an important role in the rescue of blocked DNA replication forks via replication fork reversal (RFR). RuvA specifically binds to HJ cruciform DNA, conferring on it an open structure. The RuvB hexamer acts as an ATP-dependent pump, pulling dsDNA into and through the RuvAB complex. HJ branch migration allows RuvC to scan DNA until it finds its consensus sequence, where it cleaves and resolves the cruciform DNA. This chain is Holliday junction branch migration complex subunit RuvA, found in Clostridium tetani (strain Massachusetts / E88).